Consider the following 405-residue polypeptide: Beta-citrylglutamate synthase B (405 aa).

The ATP-grasp domain maps to 115–300 (FQELAGHGVP…VAGIVADFVL (186 aa)). ATP is bound by residues lysine 154, 189–199 (QEYVKESHGRD), and arginine 215. Aspartate 260, glutamate 273, and asparagine 275 together coordinate Mg(2+). Aspartate 260, glutamate 273, and asparagine 275 together coordinate Mn(2+). The segment at 359-387 (AMSTMSTSSTSSESEADLTETGPTPVGAN) is disordered. The span at 360 to 371 (MSTMSTSSTSSE) shows a compositional bias: low complexity.

Belongs to the RimK family. It depends on Mg(2+) as a cofactor. The cofactor is Mn(2+).

It is found in the cytoplasm. It carries out the reaction citrate + L-glutamate + ATP = beta-citrylglutamate + ADP + phosphate + H(+). It catalyses the reaction N-acetyl-L-aspartate + L-glutamate + ATP = N-acetyl-L-aspartyl-L-glutamate + ADP + phosphate + H(+). Its function is as follows. Catalyzes the synthesis of beta-citryl-L-glutamate and N-acetyl-L-aspartyl-L-glutamate. Beta-citryl-L-glutamate is synthesized more efficiently than N-acetyl-L-aspartyl-L-glutamate. The protein is Beta-citrylglutamate synthase B (rimklb) of Danio rerio (Zebrafish).